The following is a 222-amino-acid chain: UPF0758 protein YicR (222 aa).

The MPN domain maps to 100 to 222 (PLLSPEMTRE…YVSFAERGWI (123 aa)). Residues His171, His173, and Asp184 each contribute to the Zn(2+) site. The JAMM motif signature appears at 171–184 (HNHPSGCAEPSKAD).

It belongs to the UPF0758 family. YicR subfamily.

The chain is UPF0758 protein YicR from Escherichia coli O45:K1 (strain S88 / ExPEC).